Reading from the N-terminus, the 458-residue chain is UDP-N-acetylmuramoylalanine--D-glutamate ligase (458 aa).

124-130 (GSDGKTT) contacts ATP.

This sequence belongs to the MurCDEF family.

The protein localises to the cytoplasm. The enzyme catalyses UDP-N-acetyl-alpha-D-muramoyl-L-alanine + D-glutamate + ATP = UDP-N-acetyl-alpha-D-muramoyl-L-alanyl-D-glutamate + ADP + phosphate + H(+). It participates in cell wall biogenesis; peptidoglycan biosynthesis. Its function is as follows. Cell wall formation. Catalyzes the addition of glutamate to the nucleotide precursor UDP-N-acetylmuramoyl-L-alanine (UMA). The sequence is that of UDP-N-acetylmuramoylalanine--D-glutamate ligase from Clostridium kluyveri (strain NBRC 12016).